The primary structure comprises 131 residues: Small ribosomal subunit protein uS8 (131 aa).

This sequence belongs to the universal ribosomal protein uS8 family. In terms of assembly, part of the 30S ribosomal subunit. Contacts proteins S5 and S12.

In terms of biological role, one of the primary rRNA binding proteins, it binds directly to 16S rRNA central domain where it helps coordinate assembly of the platform of the 30S subunit. This is Small ribosomal subunit protein uS8 from Desulforudis audaxviator (strain MP104C).